A 672-amino-acid chain; its full sequence is Glycine--tRNA ligase beta subunit (672 aa).

The protein belongs to the class-II aminoacyl-tRNA synthetase family. In terms of assembly, tetramer of two alpha and two beta subunits.

It is found in the cytoplasm. The catalysed reaction is tRNA(Gly) + glycine + ATP = glycyl-tRNA(Gly) + AMP + diphosphate. This Thermotoga maritima (strain ATCC 43589 / DSM 3109 / JCM 10099 / NBRC 100826 / MSB8) protein is Glycine--tRNA ligase beta subunit (glyS).